The primary structure comprises 312 residues: Cytochrome c biogenesis protein CcsA (312 aa).

8 consecutive transmembrane segments (helical) span residues 9-29 (ILTH…LITF), 44-64 (GIIV…ISSG), 71-91 (LYES…IPYF), 111-131 (GFAT…VPAL), 143-163 (MILG…LLVI), 216-236 (VISL…VWAN), 251-271 (WAFI…NINL), and 277-297 (AIIA…VNLL).

Belongs to the CcmF/CycK/Ccl1/NrfE/CcsA family. May interact with Ccs1.

The protein resides in the plastid. The protein localises to the chloroplast thylakoid membrane. In terms of biological role, required during biogenesis of c-type cytochromes (cytochrome c6 and cytochrome f) at the step of heme attachment. This Atropa belladonna (Belladonna) protein is Cytochrome c biogenesis protein CcsA.